Consider the following 1115-residue polypeptide: G-protein coupled receptor GRL101 (1115 aa).

Positions M1–G24 are cleaved as a signal peptide. The Extracellular segment spans residues V25–V767. 12 LDL-receptor class A domains span residues T36–C79, C77–I115, Y116–R155, R156–S196, D195–L232, K231–N269, Y272–N318, S320–A363, P365–N403, H404–P442, P444–Q485, and H486–Y525. Intrachain disulfides connect C38/C53, C46/C66, C60/C77, C79/C91, C86/C104, C98/C113, C118/C131, C138/C153, C158/C170, C165/C183, C177/C194, C202/C220, C214/C230, C233/C245, C240/C258, and C252/C267. N-linked (GlcNAc...) asparagine glycosylation is present at N87. The N-linked (GlcNAc...) asparagine glycan is linked to N166. A glycan (N-linked (GlcNAc...) asparagine) is linked at N269. 3 disulfide bridges follow: C274-C291, C282-C304, and C298-C316. N318 carries N-linked (GlcNAc...) asparagine glycosylation. 15 disulfides stabilise this stretch: C322-C339, C334-C352, C346-C361, C367-C379, C374-C392, C386-C401, C406-C418, C413-C431, C425-C440, C446-C458, C453-C474, C465-C483, C488-C500, C495-C513, and C507-C523. An N-linked (GlcNAc...) asparagine glycan is attached at N482. An N-linked (GlcNAc...) asparagine glycan is attached at N502. Positions W518–K562 constitute an LRRNT domain. N-linked (GlcNAc...) asparagine glycosylation is present at N571. LRR repeat units lie at residues K584–N605, K608–G629, N632–S653, H656–G677, Q680–N701, and N704–G725. 2 N-linked (GlcNAc...) asparagine glycosylation sites follow: N618 and N624. N-linked (GlcNAc...) asparagine glycosylation is present at N685. A helical transmembrane segment spans residues L768 to F788. The Cytoplasmic segment spans residues W789 to S801. A helical membrane pass occupies residues F802–A822. Over T823–E857 the chain is Extracellular. A helical membrane pass occupies residues L858–L878. The Cytoplasmic segment spans residues R879–Q887. The chain crosses the membrane as a helical span at residues A888–L908. The Extracellular portion of the chain corresponds to G909–G941. The helical transmembrane segment at V942–F962 threads the bilayer. Topologically, residues S963–T988 are cytoplasmic. A helical transmembrane segment spans residues L989–L1009. Topologically, residues A1010–Q1017 are extracellular. A helical membrane pass occupies residues V1018–Y1038. Topologically, residues T1039 to S1115 are cytoplasmic.

Belongs to the G-protein coupled receptor 1 family. In terms of tissue distribution, predominantly expressed in a small number of neurons within the central nervous system and to a lesser extent in the heart.

It is found in the cell membrane. Functionally, might directly transduce signals carried by large extracellular lipoprotein complexes into neuronal events. This chain is G-protein coupled receptor GRL101, found in Lymnaea stagnalis (Great pond snail).